The primary structure comprises 263 residues: Probable 6-oxopurine nucleoside phosphorylase (263 aa).

Phosphate is bound by residues T9, 49-50 (RH), and 82-83 (TA). Residue M181 coordinates substrate. T182 contacts phosphate. 205–207 (NYA) contacts substrate.

Belongs to the PNP/MTAP phosphorylase family. MTAP subfamily. As to quaternary structure, homohexamer. Dimer of a homotrimer.

The enzyme catalyses a purine D-ribonucleoside + phosphate = a purine nucleobase + alpha-D-ribose 1-phosphate. Its pathway is purine metabolism; purine nucleoside salvage. Its function is as follows. Purine nucleoside phosphorylase which is highly specific for 6-oxopurine nucleosides. Cleaves guanosine or inosine to respective bases and sugar-1-phosphate molecules. Involved in purine salvage. The sequence is that of Probable 6-oxopurine nucleoside phosphorylase from Dictyoglomus turgidum (strain DSM 6724 / Z-1310).